We begin with the raw amino-acid sequence, 85 residues long: Probable Thioredoxin (85 aa).

Residues 2 to 85 (VVKIEVFTSP…LFEAISDEIE (84 aa)) form the Glutaredoxin domain. Cys-13 and Cys-16 form a disulfide bridge.

Belongs to the glutaredoxin family.

It localises to the cytoplasm. Functionally, does not function as a glutathione-disulfide oxidoreductase in the presence of glutathione and glutathione reductase. May be a component of a ribonucleotide-reducing system distinct from the previously described systems utilizing thioredoxin or glutaredoxin. The polypeptide is Probable Thioredoxin (Methanothermobacter marburgensis (strain ATCC BAA-927 / DSM 2133 / JCM 14651 / NBRC 100331 / OCM 82 / Marburg) (Methanobacterium thermoautotrophicum)).